Here is a 256-residue protein sequence, read N- to C-terminus: 5'-nucleotidase SurE (256 aa).

A divalent metal cation is bound by residues Asp9, Asp10, Ser42, and Asn99.

This sequence belongs to the SurE nucleotidase family. The cofactor is a divalent metal cation.

The protein localises to the cytoplasm. The enzyme catalyses a ribonucleoside 5'-phosphate + H2O = a ribonucleoside + phosphate. In terms of biological role, nucleotidase that shows phosphatase activity on nucleoside 5'-monophosphates. The polypeptide is 5'-nucleotidase SurE (Symbiobacterium thermophilum (strain DSM 24528 / JCM 14929 / IAM 14863 / T)).